We begin with the raw amino-acid sequence, 421 residues long: MKQMIIHGGKPLKGDVWIGGAKNSTVALIPASILSRTPVTLEGVPRIADVDNLMDLLSEMDVKCDFHETTLRINPDNIKRSPLPAGKIKSLRASYYFMGALLGRFGKAVVGFPGGDDIGPRPIDQHIKGFEALGATVENKNDQIIITAPKTGLRGAKIHLKMPSVGATMNIIMASVMAKGQTIIENAAKEPEIIDLATFLNNMGAVIRGAGTEVIRIEGVEELKAQTPHTIIPDRIEAGTYVALAACIGNGIRIHNIIEEHLDSYLAKVEEMGVVIDADEDSLYVYPAGDLKMIQVRTDVYPGFATDLQQPITPLLLTAKSGEGVVIDQIYPKRVGHIPELQKMGANIQVEDNIILVHPTHHLHGAHVSAGEIRAGACLMLAGLMADGETIISNAGNILRGYDRIEQKLRQLGAEVSVIDV.

Position 22-23 (lysine 22–asparagine 23) interacts with phosphoenolpyruvate. Arginine 92 provides a ligand contact to UDP-N-acetyl-alpha-D-glucosamine. The active-site Proton donor is the aspartate 116. UDP-N-acetyl-alpha-D-glucosamine contacts are provided by residues arginine 121–glutamine 125, aspartate 307, and isoleucine 330.

The protein belongs to the EPSP synthase family. MurA subfamily.

Its subcellular location is the cytoplasm. The enzyme catalyses phosphoenolpyruvate + UDP-N-acetyl-alpha-D-glucosamine = UDP-N-acetyl-3-O-(1-carboxyvinyl)-alpha-D-glucosamine + phosphate. The protein operates within cell wall biogenesis; peptidoglycan biosynthesis. Its function is as follows. Cell wall formation. Adds enolpyruvyl to UDP-N-acetylglucosamine. This chain is UDP-N-acetylglucosamine 1-carboxyvinyltransferase, found in Lactobacillus johnsonii (strain CNCM I-12250 / La1 / NCC 533).